Reading from the N-terminus, the 880-residue chain is Alanine--tRNA ligase (880 aa).

The Zn(2+) site is built by histidine 568, histidine 572, cysteine 670, and histidine 674.

This sequence belongs to the class-II aminoacyl-tRNA synthetase family. Requires Zn(2+) as cofactor.

The protein localises to the cytoplasm. The enzyme catalyses tRNA(Ala) + L-alanine + ATP = L-alanyl-tRNA(Ala) + AMP + diphosphate. In terms of biological role, catalyzes the attachment of alanine to tRNA(Ala) in a two-step reaction: alanine is first activated by ATP to form Ala-AMP and then transferred to the acceptor end of tRNA(Ala). Also edits incorrectly charged Ser-tRNA(Ala) and Gly-tRNA(Ala) via its editing domain. The protein is Alanine--tRNA ligase of Enterococcus faecalis (strain ATCC 700802 / V583).